The sequence spans 142 residues: Acidic phospholipase A2 KBf-grIB (142 aa).

7 disulfide bridges follow: Cys28/Cys94, Cys44/Cys141, Cys46/Cys62, Cys61/Cys122, Cys68/Cys115, Cys78/Cys108, and Cys101/Cys113. Ca(2+) is bound by residues Tyr45, Gly47, and Gly49. Residue His65 is part of the active site. Ca(2+) is bound at residue Asp66. Asp116 is an active-site residue.

It belongs to the phospholipase A2 family. Group I subfamily. D49 sub-subfamily. Ca(2+) is required as a cofactor. Expressed by the venom gland.

It localises to the secreted. The enzyme catalyses a 1,2-diacyl-sn-glycero-3-phosphocholine + H2O = a 1-acyl-sn-glycero-3-phosphocholine + a fatty acid + H(+). PLA2 catalyzes the calcium-dependent hydrolysis of the 2-acyl groups in 3-sn-phosphoglycerides. In Bungarus fasciatus (Banded krait), this protein is Acidic phospholipase A2 KBf-grIB.